Consider the following 72-residue polypeptide: DNA-directed RNA polymerase subunit omega (72 aa).

It belongs to the RNA polymerase subunit omega family. In terms of assembly, the RNAP catalytic core consists of 2 alpha, 1 beta, 1 beta' and 1 omega subunit. When a sigma factor is associated with the core the holoenzyme is formed, which can initiate transcription.

It carries out the reaction RNA(n) + a ribonucleoside 5'-triphosphate = RNA(n+1) + diphosphate. Promotes RNA polymerase assembly. Latches the N- and C-terminal regions of the beta' subunit thereby facilitating its interaction with the beta and alpha subunits. This chain is DNA-directed RNA polymerase subunit omega, found in Limosilactobacillus reuteri (strain DSM 20016) (Lactobacillus reuteri).